The primary structure comprises 136 residues: Putative nickel-responsive regulator (136 aa).

Ni(2+)-binding residues include histidine 76, histidine 87, histidine 89, and cysteine 95.

This sequence belongs to the transcriptional regulatory CopG/NikR family. Ni(2+) is required as a cofactor.

Transcriptional regulator. In Desulfotalea psychrophila (strain LSv54 / DSM 12343), this protein is Putative nickel-responsive regulator.